Consider the following 635-residue polypeptide: Two-component response regulator ARR18 (635 aa).

One can recognise a Response regulatory domain in the interval 19–133; it reads RVLAVDDNPT…ELQNIWHHVV (115 aa). At D70 the chain carries 4-aspartylphosphate. 2 disordered regions span residues 144–196 and 323–342; these read LPPS…KKPR and IQQGHHQNSSNSANPFGTYH. The segment covering 166 to 186 has biased composition (acidic residues); the sequence is SGDEDDSDREEDDGEGSEQDG. The Nuclear localization signal motif lies at 193–196; the sequence is KKPR. Positions 196-246 form a DNA-binding region, myb-like GARP; sequence RVVWSQELHQKFVSAVQQLGLDKAVPKKILDLMSIEGLTRENVASHLQKYR.

It belongs to the ARR family. Type-B subfamily. Binds the target DNA as a monomer. In terms of processing, two-component system major event consists of a His-to-Asp phosphorelay between a sensor histidine kinase (HK) and a response regulator (RR). In plants, the His-to-Asp phosphorelay involves an additional intermediate named Histidine-containing phosphotransfer protein (HPt). This multistep phosphorelay consists of a His-Asp-His-Asp sequential transfer of a phosphate group between first a His and an Asp of the HK protein, followed by the transfer to a conserved His of the HPt protein and finally the transfer to an Asp in the receiver domain of the RR protein. Predominantly expressed in young leaf tissue developing anthers, and siliques.

Its subcellular location is the nucleus. Functionally, transcriptional activator that binds specifically to the DNA sequence 5'-[AG]GATT-3'. Functions as a response regulator involved in His-to-Asp phosphorelay signal transduction system. Phosphorylation of the Asp residue in the receiver domain activates the ability of the protein to promote the transcription of target genes. Could directly activate some type-A response regulators in response to cytokinins. This is Two-component response regulator ARR18 (ARR18) from Arabidopsis thaliana (Mouse-ear cress).